Here is an 831-residue protein sequence, read N- to C-terminus: Probable glucan 1,3-beta-glucosidase D (831 aa).

Composition is skewed to basic and acidic residues over residues 1-24 (MPSH…YREV), 44-56 (RRDD…RSHE), 79-93 (RSHD…RSRA), 102-115 (SRRD…EYRR), 137-151 (RDGQ…DREA), and 198-213 (QRER…MESK). Disordered regions lie at residues 1-179 (MPSH…SGSH) and 192-241 (HYDE…GQSK). Over 1 to 297 (MPSHSRSRDR…AQPPFWKRKK (297 aa)) the chain is Cytoplasmic. A helical; Signal-anchor for type II membrane protein membrane pass occupies residues 298–318 (WWIVIGVLVVVLAIVIPVAVV). Over 319–831 (MSKKHGHDDD…PSFGDLPEYY (513 aa)) the chain is Extracellular. 7 N-linked (GlcNAc...) asparagine glycosylation sites follow: N376, N381, N393, N410, N442, N546, and N558. E597 functions as the Proton donor in the catalytic mechanism. 4 N-linked (GlcNAc...) asparagine glycosylation sites follow: N610, N636, N669, and N689. Residue E702 is the Nucleophile of the active site.

Belongs to the glycosyl hydrolase 5 (cellulase A) family.

Its subcellular location is the cell membrane. It catalyses the reaction Successive hydrolysis of beta-D-glucose units from the non-reducing ends of (1-&gt;3)-beta-D-glucans, releasing alpha-glucose.. In terms of biological role, glucosidase involved in the degradation of cellulosic biomass. Active on lichenan. This is Probable glucan 1,3-beta-glucosidase D (exgD) from Aspergillus oryzae (strain ATCC 42149 / RIB 40) (Yellow koji mold).